The chain runs to 333 residues: Extracellular globin (333 aa).

The signal sequence occupies residues 1–18 (MHSSIVLAIVLFVAIASA). Globin domains follow at residues 25 to 167 (CMKS…HHGR) and 174 to 318 (CMNS…KHAK). Gln-82 and His-114 together coordinate heme b. N-linked (GlcNAc...) asparagine glycosylation occurs at Asn-216. Residues Gln-231 and His-263 each coordinate heme b. The interval 314 to 333 (DKHAKAEKDHHEGEHKEEHH) is disordered.

This sequence belongs to the globin family. Homooctamer.

The protein localises to the secreted. It is found in the extracellular space. This chain is Extracellular globin, found in Pseudoterranova decipiens (Sealworm).